We begin with the raw amino-acid sequence, 149 residues long: Large ribosomal subunit protein uL13 (149 aa).

Belongs to the universal ribosomal protein uL13 family. As to quaternary structure, part of the 50S ribosomal subunit.

This protein is one of the early assembly proteins of the 50S ribosomal subunit, although it is not seen to bind rRNA by itself. It is important during the early stages of 50S assembly. The polypeptide is Large ribosomal subunit protein uL13 (Saccharolobus solfataricus (strain ATCC 35092 / DSM 1617 / JCM 11322 / P2) (Sulfolobus solfataricus)).